The primary structure comprises 692 residues: Ino eighty subunit 1 (692 aa).

Over residues 1–25 (MGKRVYDPIHDTFQLREDNSDETKA) the composition is skewed to basic and acidic residues. The tract at residues 1-133 (MGKRVYDPIH…RHLKKPDGEP (133 aa)) is disordered. Ser27 is modified (phosphoserine). Polar residues predominate over residues 28 to 56 (PMQSVKSGSQEEASPSSIQSETETVTTKS). Over residues 64 to 80 (EIDDKNDDDSTQSEEEN) the composition is skewed to acidic residues. Polar residues predominate over residues 97-109 (GASTATGPVTTNT). Positions 340-385 (SKYVEVESKAQEQDMVDEQNEVKETEAENEKQESKAAYATTLFDIL) form a coiled coil. Positions 465–485 (FMSKMEEGRKRERTNVTEVKK) are enriched in basic and acidic residues. Positions 465–550 (FMSKMEEGRK…VTPAAPTETE (86 aa)) are disordered. Residues Ser487, Ser493, and Ser504 each carry the phosphoserine modification. Residues 493 to 504 (SEEDGEGEDDKS) are compositionally biased toward acidic residues. The residue at position 507 (Thr507) is a Phosphothreonine. Polar residues predominate over residues 513–528 (SLLTPTPILESSSPMT).

As to quaternary structure, component of the chromatin-remodeling INO80 complex, at least composed of ARP4, ARP5, ARP8, RVB1, RVB2, TAF14, NHP10, IES1, IES3, IES4, IES6, ACT1, IES2, IES5 and INO80.

The protein localises to the nucleus. Its function is as follows. Probably involved in transcription regulation via its interaction with the INO80 complex, a chromatin-remodeling complex. The polypeptide is Ino eighty subunit 1 (IES1) (Saccharomyces cerevisiae (strain ATCC 204508 / S288c) (Baker's yeast)).